We begin with the raw amino-acid sequence, 314 residues long: Glycine--tRNA ligase alpha subunit (314 aa).

This sequence belongs to the class-II aminoacyl-tRNA synthetase family. Tetramer of two alpha and two beta subunits.

Its subcellular location is the cytoplasm. The enzyme catalyses tRNA(Gly) + glycine + ATP = glycyl-tRNA(Gly) + AMP + diphosphate. This is Glycine--tRNA ligase alpha subunit from Mesorhizobium japonicum (strain LMG 29417 / CECT 9101 / MAFF 303099) (Mesorhizobium loti (strain MAFF 303099)).